Reading from the N-terminus, the 56-residue chain is Large ribosomal subunit protein bL33A (56 aa).

It belongs to the bacterial ribosomal protein bL33 family.

The polypeptide is Large ribosomal subunit protein bL33A (Cutibacterium acnes (strain DSM 16379 / KPA171202) (Propionibacterium acnes)).